Reading from the N-terminus, the 222-residue chain is Millepora cytotoxin-1 (222 aa).

The N-terminal stretch at M1 to A20 is a signal peptide. A propeptide spanning residues A21–R75 is cleaved from the precursor. 3 cysteine pairs are disulfide-bonded: C89/C115, C142/C168, and C179/C222. 3 consecutive repeats follow at residues S100–R109, S153–R162, and S206–R215.

The protein belongs to the dermatopontin family. In terms of processing, is not glycosylated.

The protein resides in the secreted. The protein localises to the nematocyst. Its function is as follows. Is potently cytotoxic (EC(50) value 79 ng/mL) towards L1210 mouse leukemia cells, has hemagglutination activity on sheep erythrocytes, and is lethal in crayfish. Has no phospholipase A2 activity. This is Millepora cytotoxin-1 from Millepora dichotoma (Net fire coral).